A 354-amino-acid chain; its full sequence is Polyprenal reductase 1 (354 aa).

A run of 6 helical transmembrane segments spans residues 11-31, 78-98, 141-158, 176-196, 235-255, and 301-321; these read PLLC…ALPI, FMHF…AIWF, YHVW…IQVL, MHIV…LSLA, PLLK…WGSL, and GMLV…VFVI.

Belongs to the steroid 5-alpha reductase family. Polyprenal reductase subfamily.

It localises to the cell membrane. The catalysed reaction is a di-trans,poly-cis-dolichal + NADP(+) = a di-trans,poly-cis-polyprenal + NADPH + H(+). Its pathway is protein modification; protein glycosylation. Its function is as follows. Plays a key role in early steps of protein N-linked glycosylation by being involved in the conversion of polyprenol into dolichol. Acts as a polyprenal reductase that mediates the reduction of polyprenal into dolichal in a NADP-dependent mechanism. Dolichols are required for the synthesis of dolichol-linked monosaccharides and the oligosaccharide precursor used for N-glycosylation. The protein is Polyprenal reductase 1 of Oryza sativa subsp. indica (Rice).